The sequence spans 1269 residues: Protein strawberry notch homolog 1 (1269 aa).

Positions 21-47 (NDLFDVDGGDAGLATPTPPSVQQQQPP) are disordered. Position 113 is an N6-acetyllysine (K113). 2 positions are modified to phosphoserine: S126 and S178. K377 is subject to N6-acetyllysine. The interval 652–725 (PSNNSSPRDS…SLITSQDAVE (74 aa)) is disordered. 3 positions are modified to phosphoserine: S656, S657, and S661. Residues 679–693 (SGSESDVSDNEESDY) show a composition bias toward acidic residues. Phosphoserine is present on residues S700 and S701. Positions 719 to 746 (TSQDAVERAQQMKKDLLDKLEKLAEDLP) form a coiled coil. K1098 bears the N6-acetyllysine mark. S1262 is modified (phosphoserine).

It belongs to the SBNO family.

It is found in the nucleus. Its function is as follows. Plays a crucial role in the regulation of neural stem cells (NSCs) proliferation. Enhances the phosphorylation of GSK3B through the PI3K-Akt signaling pathway, thereby upregulating the Wnt/beta-catenin signaling pathway and promoting the proliferation of NSCs. Improves ischemic stroke recovery while inhibiting neuroinflammation through small extracellular vesicles (sEVs)-mediated mechanism. Enhances the secretion of sEVs from NSCs, which in turn inhibit both the MAPK and NF-kappaB pathways in microglia. This inhibition suppresses the pro-inflammatory M1 polarization of microglia, promoting a shift towards the M2 anti-inflammatory phenotype, which is beneficial for reducing neuroinflammation. This is Protein strawberry notch homolog 1 (Sbno1) from Rattus norvegicus (Rat).